The following is a 417-amino-acid chain: Serine hydroxymethyltransferase (417 aa).

(6S)-5,6,7,8-tetrahydrofolate-binding positions include leucine 121 and 125 to 127 (GHL). Lysine 229 is subject to N6-(pyridoxal phosphate)lysine. 355–357 (SSF) lines the (6S)-5,6,7,8-tetrahydrofolate pocket.

The protein belongs to the SHMT family. In terms of assembly, homodimer. Requires pyridoxal 5'-phosphate as cofactor.

The protein resides in the cytoplasm. It catalyses the reaction (6R)-5,10-methylene-5,6,7,8-tetrahydrofolate + glycine + H2O = (6S)-5,6,7,8-tetrahydrofolate + L-serine. The protein operates within one-carbon metabolism; tetrahydrofolate interconversion. It participates in amino-acid biosynthesis; glycine biosynthesis; glycine from L-serine: step 1/1. In terms of biological role, catalyzes the reversible interconversion of serine and glycine with tetrahydrofolate (THF) serving as the one-carbon carrier. This reaction serves as the major source of one-carbon groups required for the biosynthesis of purines, thymidylate, methionine, and other important biomolecules. Also exhibits THF-independent aldolase activity toward beta-hydroxyamino acids, producing glycine and aldehydes, via a retro-aldol mechanism. The chain is Serine hydroxymethyltransferase from Baumannia cicadellinicola subsp. Homalodisca coagulata.